A 257-amino-acid chain; its full sequence is MRYLKRLSWYISILILIVVIAGCGKGNETKEGSKEEQIKKSFAKTLDMYPIKNLEDLYDKEGYRDSEFKKSDKGTWTIYTDFAKSNKPGELDDEGMVLNLDRNTRTAKGHYFVTTFYRNGKLPDEKNYKIEMKNNKIILLDEVKDDKLKQKIENFKFFGQYANLKELRKYNNGDVSINENVPSYDVEYKMSNKDEIVKELRSRYNISTEKSPILKMHIDGDLKGSSVGYRKLEIDFSKRENSKLSVIEFLSYKPAKK.

A signal peptide spans 1-22 (MRYLKRLSWYISILILIVVIAG). Cys-23 carries the N-palmitoyl cysteine lipid modification. Residue Cys-23 is the site of S-diacylglycerol cysteine attachment.

This sequence belongs to the staphylococcal tandem lipoprotein family.

It is found in the cell membrane. This is an uncharacterized protein from Staphylococcus aureus (strain N315).